An 85-amino-acid chain; its full sequence is HssA/B-like protein 62 (85 aa).

The protein belongs to the hssA/B family.

This Dictyostelium discoideum (Social amoeba) protein is HssA/B-like protein 62 (hssl62).